The chain runs to 390 residues: Oxygen-dependent coproporphyrinogen-III oxidase (390 aa).

The interval 131 to 140 (VLQDGDVFEK) is important for dimerization. Ser181 serves as a coordination point for substrate. His195 (proton donor) is an active-site residue. Residues 197 to 199 (NYR) and 348 to 353 (GARYES) each bind substrate. The tract at residues 329 to 365 (YVEFNLIYDRGTKFGLYTPGARYESILMSLPLHARWE) is important for dimerization.

The protein belongs to the aerobic coproporphyrinogen-III oxidase family. Homodimer.

The catalysed reaction is coproporphyrinogen III + O2 + 2 H(+) = protoporphyrinogen IX + 2 CO2 + 2 H2O. Its pathway is porphyrin-containing compound metabolism; protoporphyrin-IX biosynthesis; protoporphyrinogen-IX from coproporphyrinogen-III (O2 route): step 1/1. In terms of biological role, involved in the heme biosynthesis. Catalyzes the aerobic oxidative decarboxylation of propionate groups of rings A and B of coproporphyrinogen-III to yield the vinyl groups in protoporphyrinogen-IX. This Drosophila melanogaster (Fruit fly) protein is Oxygen-dependent coproporphyrinogen-III oxidase (Coprox).